A 313-amino-acid polypeptide reads, in one-letter code: UPF0252 protein AF_0384 (313 aa).

The protein belongs to the UPF0252 family.

The chain is UPF0252 protein AF_0384 from Archaeoglobus fulgidus (strain ATCC 49558 / DSM 4304 / JCM 9628 / NBRC 100126 / VC-16).